A 382-amino-acid polypeptide reads, in one-letter code: Sphingoid long-chain base transporter RSB1 (382 aa).

Over 1–34 (MSNATNNTLGSLLPQLEAAANSNSLYGGMVPNLR) the chain is Extracellular. N-linked (GlcNAc...) asparagine glycosylation is found at Asn3 and Asn6. The helical transmembrane segment at 35–55 (FNITMIVIWGILLTIHVVQLL) threads the bilayer. Topologically, residues 56 to 57 (MR) are cytoplasmic. The helical transmembrane segment at 58-78 (QYWFSIAFICTGILEVLGFIG) threads the bilayer. The Extracellular segment spans residues 79–90 (RTWSHSNVADMD). The helical transmembrane segment at 91–111 (AFLLNMICLTIAPVFTMGGIY) threads the bilayer. Over 112–135 (YQLAKLIEVYGHRFSLLPSPMAYS) the chain is Cytoplasmic. The helical transmembrane segment at 136–156 (FIFICSDIVSLVVQAVGGGLC) threads the bilayer. Topologically, residues 157–171 (GVAVTDGTSTTTGNH) are extracellular. The helical transmembrane segment at 172–192 (VFIAGLAIQVASMAIFLMLWF) threads the bilayer. At 193–241 (HFLFRIYISVRWEHINSRPISLSLLKISQTEVDYLYREKFHFLRLEPKR) the chain is on the cytoplasmic side. A helical transmembrane segment spans residues 242 to 262 (WVFHYFNLAMTVAVLTIFTRC). Topologically, residues 263-281 (CYRLAELVVGWDGYLITHE) are extracellular. A helical transmembrane segment spans residues 282-302 (WYFIILDALMMAIATVTLTIF). Residues 303–382 (HPGFAFKGRS…LFSSKKKAKL (80 aa)) are Cytoplasmic-facing.

This sequence belongs to the lipid-translocating exporter (LTE) (TC 9.A.26.1) family.

Its subcellular location is the cell membrane. Its function is as follows. Catalyzes the ATP-dependent translocation of sphingoid long-chain bases (LCBs) from the cytoplasmic site toward the extracytoplasmic side of the membrane (flip-flop). Involved in the establishment of the functional lipid asymmetry of the plasma membrane. Regulates intracellular levels of LCBs, sphingolipid precursors that are growth inhibitory at increased levels. In Saccharomyces cerevisiae (strain RM11-1a) (Baker's yeast), this protein is Sphingoid long-chain base transporter RSB1 (RSB1).